A 271-amino-acid polypeptide reads, in one-letter code: Elongation factor Ts (271 aa).

The tract at residues 76-79 (TDFV) is involved in Mg(2+) ion dislocation from EF-Tu.

It belongs to the EF-Ts family.

Its subcellular location is the cytoplasm. Functionally, associates with the EF-Tu.GDP complex and induces the exchange of GDP to GTP. It remains bound to the aminoacyl-tRNA.EF-Tu.GTP complex up to the GTP hydrolysis stage on the ribosome. The chain is Elongation factor Ts from Mycobacterium ulcerans (strain Agy99).